The primary structure comprises 205 residues: Tic20 family protein Ycf60 (205 aa).

The next 5 membrane-spanning stretches (helical) occupy residues 5 to 25, 54 to 74, 102 to 122, 130 to 150, and 163 to 183; these read LFVN…VILI, AISC…FGIV, LIGF…IIQI, IVQA…LTSL, and LADT…TDAL.

Belongs to the Tic20 family.

The protein resides in the plastid. Its subcellular location is the chloroplast membrane. The protein is Tic20 family protein Ycf60 (ycf60) of Cyanidium caldarium (Red alga).